Here is a 340-residue protein sequence, read N- to C-terminus: S-adenosylmethionine:tRNA ribosyltransferase-isomerase (340 aa).

Belongs to the QueA family. As to quaternary structure, monomer.

The protein localises to the cytoplasm. It carries out the reaction 7-aminomethyl-7-carbaguanosine(34) in tRNA + S-adenosyl-L-methionine = epoxyqueuosine(34) in tRNA + adenine + L-methionine + 2 H(+). It participates in tRNA modification; tRNA-queuosine biosynthesis. Transfers and isomerizes the ribose moiety from AdoMet to the 7-aminomethyl group of 7-deazaguanine (preQ1-tRNA) to give epoxyqueuosine (oQ-tRNA). This Chromobacterium violaceum (strain ATCC 12472 / DSM 30191 / JCM 1249 / CCUG 213 / NBRC 12614 / NCIMB 9131 / NCTC 9757 / MK) protein is S-adenosylmethionine:tRNA ribosyltransferase-isomerase.